A 365-amino-acid polypeptide reads, in one-letter code: Palmitoyltransferase ZDHHC20 (365 aa).

Residues 1 to 14 lie on the Cytoplasmic side of the membrane; it reads MAPCTLWRCCQRTV. Residues 15-35 form a helical membrane-spanning segment; it reads GWVPVLFITFVVVWSYYAYVV. Topologically, residues 36–53 are lumenal; the sequence is ELCVFTLSGNGENGKAVV. A helical transmembrane segment spans residues 54–74; it reads YLVAFHLFFVMFVWSYWMTIF. The Cytoplasmic portion of the chain corresponds to 75–169; sequence TSPASPSKEF…NNCVGFSNYK (95 aa). Residues 126–176 form the DHHC domain; the sequence is RYCERCQLIKPDRAHHCSACDMCILKMDHHCPWVNNCVGFSNYKFFLLFLF. The Zn(2+) site is built by cysteine 128 and cysteine 131. Residues lysine 135 and 140 to 143 each bind substrate; that span reads HHCS. Zn(2+) contacts are provided by histidine 141, cysteine 142, cysteine 145, cysteine 148, and histidine 155. Cysteine 156 (S-palmitoyl cysteine intermediate) is an active-site residue. Position 162 (cysteine 162) interacts with Zn(2+). Residues 170–190 traverse the membrane as a helical segment; the sequence is FFLLFLFYSLLYCLFVATTVL. At 191–207 the chain is on the lumenal side; it reads QYFIKFWTNELTDTRAK. Residues 208–231 form a helical membrane-spanning segment; sequence FHVLFLFFVSTMFFISVLSLLSYH. Residues 232–365 are Cytoplasmic-facing; that stretch reads CWLVGKNRTT…NNHVTVAIEN (134 aa). Residues 301 to 365 form a disordered region; it reads PEQASVSNQS…NNHVTVAIEN (65 aa). A compositionally biased stretch (polar residues) spans 302–321; sequence EQASVSNQSESARSIGSNQP. A phosphoserine mark is found at serine 305 and serine 330.

The protein belongs to the DHHC palmitoyltransferase family. In terms of processing, autopalmitoylated (in vitro).

Its subcellular location is the golgi apparatus membrane. It is found in the cell membrane. The protein localises to the cytoplasm. The protein resides in the perinuclear region. It localises to the endoplasmic reticulum membrane. Its subcellular location is the endoplasmic reticulum-Golgi intermediate compartment membrane. The catalysed reaction is L-cysteinyl-[protein] + hexadecanoyl-CoA = S-hexadecanoyl-L-cysteinyl-[protein] + CoA. It carries out the reaction L-cysteinyl-[protein] + tetradecanoyl-CoA = S-tetradecanoyl-L-cysteinyl-[protein] + CoA. The enzyme catalyses L-cysteinyl-[protein] + octadecanoyl-CoA = S-octadecanoyl-L-cysteinyl-[protein] + CoA. Functionally, palmitoyltransferase that could catalyze the addition of palmitate onto various protein substrates. Catalyzes palmitoylation of Cys residues in the cytoplasmic C-terminus of EGFR, and modulates the duration of EGFR signaling by modulating palmitoylation-dependent EGFR internalization and degradation. Has a preference for acyl-CoA with C16 fatty acid chains. Can also utilize acyl-CoA with C14 and C18 fatty acid chains. May palmitoylate CALHM1 subunit of gustatory voltage-gated ion channels and modulate channel gating and kinetics. In Bos taurus (Bovine), this protein is Palmitoyltransferase ZDHHC20.